Here is a 491-residue protein sequence, read N- to C-terminus: Aspartyl/glutamyl-tRNA(Asn/Gln) amidotransferase subunit B (491 aa).

Belongs to the GatB/GatE family. GatB subfamily. In terms of assembly, heterotrimer of A, B and C subunits.

The catalysed reaction is L-glutamyl-tRNA(Gln) + L-glutamine + ATP + H2O = L-glutaminyl-tRNA(Gln) + L-glutamate + ADP + phosphate + H(+). It carries out the reaction L-aspartyl-tRNA(Asn) + L-glutamine + ATP + H2O = L-asparaginyl-tRNA(Asn) + L-glutamate + ADP + phosphate + 2 H(+). Functionally, allows the formation of correctly charged Asn-tRNA(Asn) or Gln-tRNA(Gln) through the transamidation of misacylated Asp-tRNA(Asn) or Glu-tRNA(Gln) in organisms which lack either or both of asparaginyl-tRNA or glutaminyl-tRNA synthetases. The reaction takes place in the presence of glutamine and ATP through an activated phospho-Asp-tRNA(Asn) or phospho-Glu-tRNA(Gln). This chain is Aspartyl/glutamyl-tRNA(Asn/Gln) amidotransferase subunit B, found in Paraburkholderia phymatum (strain DSM 17167 / CIP 108236 / LMG 21445 / STM815) (Burkholderia phymatum).